Consider the following 139-residue polypeptide: Ribonuclease P protein component (139 aa).

The tract at residues 120-139 (KATTGGECTPKSEKCVTAPR) is disordered.

This sequence belongs to the RnpA family. Consists of a catalytic RNA component (M1 or rnpB) and a protein subunit.

It carries out the reaction Endonucleolytic cleavage of RNA, removing 5'-extranucleotides from tRNA precursor.. RNaseP catalyzes the removal of the 5'-leader sequence from pre-tRNA to produce the mature 5'-terminus. It can also cleave other RNA substrates such as 4.5S RNA. The protein component plays an auxiliary but essential role in vivo by binding to the 5'-leader sequence and broadening the substrate specificity of the ribozyme. In Chlamydia pneumoniae (Chlamydophila pneumoniae), this protein is Ribonuclease P protein component.